Reading from the N-terminus, the 503-residue chain is Chromodomain Y-like protein 2 (503 aa).

Residues 7–67 form the Chromo domain; sequence YEVERIVDKR…LHLSKDKRVK (61 aa). The interval 66-177 is disordered; it reads VKSGKQAGAS…GNGSHQPDLE (112 aa). Residues 88–98 show a composition bias toward basic and acidic residues; it reads RLSHRPLEPGK. Over residues 101 to 120 the composition is skewed to basic residues; that stretch reads PSSHKRKRVNSPLSRPKKGS. Polar residues predominate over residues 130 to 140; that stretch reads KTVSYRTTPSG.

Interacts (via chromo domain) with histone H3K9me3.

The protein resides in the nucleus. The polypeptide is Chromodomain Y-like protein 2 (Cdyl2) (Mus musculus (Mouse)).